The sequence spans 344 residues: Ion-translocating oxidoreductase complex subunit D (344 aa).

Helical transmembrane passes span 23 to 43, 44 to 64, 80 to 100, and 120 to 140; these read LVLGACVPGLFTLTWLYGAGT, LLNLAWAGLVALACEAAMLAL, VTALLLAVALPPCAPWLLTLV, and PFNPAMLGYVVALVSFPLEMT. Position 172 is an FMN phosphoryl threonine (Thr172). 5 consecutive transmembrane segments (helical) span residues 198-218, 222-242, 252-272, 285-305, and 306-326; these read LGGAGGEWVNLAFLLGGLFLL, LFTWHAPLGMLAGLFAMSLLF, GSPLFHLFSGATMLGAFFIVT, LLFGLGVGVLTYLIRAWGGYP, and DGVAFAVLLMNLAAPTIDYYT.

It belongs to the NqrB/RnfD family. In terms of assembly, the complex is composed of six subunits: RnfA, RnfB, RnfC, RnfD, RnfE and RnfG. The cofactor is FMN.

The protein localises to the cell inner membrane. In terms of biological role, part of a membrane-bound complex that couples electron transfer with translocation of ions across the membrane. The polypeptide is Ion-translocating oxidoreductase complex subunit D (Pseudomonas paraeruginosa (strain DSM 24068 / PA7) (Pseudomonas aeruginosa (strain PA7))).